The chain runs to 497 residues: Long chain base biosynthesis protein 2c (497 aa).

Residues 4–24 (VPFVTAVTTVFSYGVIFGFGH) form a helical membrane-spanning segment. Position 319 is an N6-(pyridoxal phosphate)lysine (Lys-319).

This sequence belongs to the class-II pyridoxal-phosphate-dependent aminotransferase family. In terms of assembly, heterodimer with LCB1. Component of the serine palmitoyltransferase (SPT) complex, composed of LCB1 and LCB2. The cofactor is pyridoxal 5'-phosphate.

It localises to the endoplasmic reticulum membrane. The enzyme catalyses L-serine + hexadecanoyl-CoA + H(+) = 3-oxosphinganine + CO2 + CoA. Its pathway is lipid metabolism; sphingolipid metabolism. Functionally, serine palmitoyltransferase (SPT). The heterodimer formed with LCB1 constitutes the catalytic core. The chain is Long chain base biosynthesis protein 2c from Oryza sativa subsp. japonica (Rice).